The primary structure comprises 104 residues: Gastrin (104 aa).

The N-terminal stretch at 1–21 is a signal peptide; the sequence is MPRLCVCMLVLVLALATFSEA. Positions 22-58 are excised as a propeptide; sequence SWKPRSQLQDASSGPRTNGALEQHQLEKLGPASHHRR. A disordered region spans residues 23–104; it reads WKPRSQLQDA…RSAEEEDQYN (82 aa). Positions 25–37 are enriched in polar residues; the sequence is PRSQLQDASSGPR. Position 87 is a sulfotyrosine (Tyr-87). Phe-92 carries the post-translational modification Phenylalanine amide. Phosphoserine is present on Ser-96. The propeptide occupies 96 to 104; it reads SAEEEDQYN. Position 103 is a sulfotyrosine (Tyr-103).

This sequence belongs to the gastrin/cholecystokinin family. Post-translationally, sulfation on Tyr-87 enhances proteolytic processing, and blocks peptide degradation. Levels of sulfation differ between proteolytically-cleaved gastrins and between tissues.

Its subcellular location is the secreted. Gastrin stimulates the stomach mucosa to produce and secrete hydrochloric acid and the pancreas to secrete its digestive enzymes. It also stimulates smooth muscle contraction and increases blood circulation and water secretion in the stomach and intestine. The protein is Gastrin (Gast) of Rattus norvegicus (Rat).